The sequence spans 150 residues: Large ribosomal subunit protein bL9 (150 aa).

It belongs to the bacterial ribosomal protein bL9 family.

Its function is as follows. Binds to the 23S rRNA. In Vibrio campbellii (strain ATCC BAA-1116), this protein is Large ribosomal subunit protein bL9.